The sequence spans 361 residues: Sensor protein VanSC (361 aa).

Helical transmembrane passes span 16-36 (FVTT…IRFI) and 59-79 (WLFC…IYYM). One can recognise a Histidine kinase domain in the interval 144–359 (YLAHDLRTPL…IFNVRLPKPA (216 aa)). At histidine 147 the chain carries Phosphohistidine; by autocatalysis. Glutamate 252 is a binding site for Mg(2+).

In terms of processing, autophosphorylated.

The protein resides in the membrane. It catalyses the reaction ATP + protein L-histidine = ADP + protein N-phospho-L-histidine.. The protein is Sensor protein VanSC of Enterococcus gallinarum.